Consider the following 360-residue polypeptide: Photosystem II protein D1 (360 aa).

3 helical membrane-spanning segments follow: residues 29–46 (YVGW…TATT), 118–133 (QFLI…QWEL), and 142–156 (WICV…ARTA). A pheophytin a-binding site is contributed by tyrosine 126. The [CaMn4O5] cluster site is built by aspartate 170 and glutamate 189. The chain crosses the membrane as a helical span at residues 197 to 218 (FHMLGVAGVFGGSLFSAMHGSL). Histidine 198 lines the chlorophyll a pocket. A quinone contacts are provided by residues histidine 215 and 264-265 (SF). Residue histidine 215 coordinates Fe cation. Histidine 272 provides a ligand contact to Fe cation. A helical membrane pass occupies residues 274–288 (FLGAWPVIGIWFTAM). [CaMn4O5] cluster-binding residues include histidine 332, glutamate 333, aspartate 342, and alanine 344. A propeptide spanning residues 345–360 (SGEQAPVALTAPAING) is cleaved from the precursor.

It belongs to the reaction center PufL/M/PsbA/D family. As to quaternary structure, PSII is composed of 1 copy each of membrane proteins PsbA, PsbB, PsbC, PsbD, PsbE, PsbF, PsbH, PsbI, PsbJ, PsbK, PsbL, PsbM, PsbT, PsbX, PsbY, PsbZ, Psb30/Ycf12, peripheral proteins PsbO, CyanoQ (PsbQ), PsbU, PsbV and a large number of cofactors. It forms dimeric complexes. The D1/D2 heterodimer binds P680, chlorophylls that are the primary electron donor of PSII, and subsequent electron acceptors. It shares a non-heme iron and each subunit binds pheophytin, quinone, additional chlorophylls, carotenoids and lipids. D1 provides most of the ligands for the Mn4-Ca-O5 cluster of the oxygen-evolving complex (OEC). There is also a Cl(-1) ion associated with D1 and D2, which is required for oxygen evolution. The PSII complex binds additional chlorophylls, carotenoids and specific lipids. is required as a cofactor. In terms of processing, tyr-161 forms a radical intermediate that is referred to as redox-active TyrZ, YZ or Y-Z. C-terminally processed by CtpA; processing is essential to allow assembly of the oxygen-evolving complex and thus photosynthetic growth.

The protein localises to the cellular thylakoid membrane. The enzyme catalyses 2 a plastoquinone + 4 hnu + 2 H2O = 2 a plastoquinol + O2. Functionally, photosystem II (PSII) is a light-driven water:plastoquinone oxidoreductase that uses light energy to abstract electrons from H(2)O, generating O(2) and a proton gradient subsequently used for ATP formation. It consists of a core antenna complex that captures photons, and an electron transfer chain that converts photonic excitation into a charge separation. The D1/D2 (PsbA/PsbD) reaction center heterodimer binds P680, the primary electron donor of PSII as well as several subsequent electron acceptors. The sequence is that of Photosystem II protein D1 from Synechocystis sp. (strain PCC 6714) (Aphanocapsa sp. (strain PCC 6714)).